Reading from the N-terminus, the 663-residue chain is MNKKETNTSWWRIILISLGISIICILAAFLAMKDGFFVLENNTKNNNPDSPENKASSKMAYARLLNYIEKGWIKTIDFYENGQIAIVEASSSELSDRPQRLRVEIPAGSTSLIGKLKEANVDINAHPPKLDIFKTISDTLGSLIVPGLVVAVFYLFLERANNNNNNNSNGSPFGPGGGPNQNMRGLGEIKKEIQKEPDTGITFKDIAGIEEVKEEFEEIVTFLKDPSRFTAVGATIPKGVLLVGPPGTGKTLLAKAIAGEAKVPFINISGSEFVEMFVGVGAARVRNLFEKAKQDTPCIIFIDEIDAVGRQRGAGVGGGNDEREQTLNQLLTEMDGFEKNKGIVVIAATNRADILDNALLRPGRFDRQVTVNPPDRAGRVAILAVHARNKKLSPAISLETIAQRTTGFGGAELANLLNEAAIISAREEKAEIGSKEISLAIERVIAGLEGPSIADNKNKRLVAYHEAGHAMVGTLLRNHDNVQNVTLVPRGQARGLTWFMPNEDPSLVTRGQIVARIVGALGGRAAEQSVFGSTEITTGASGDLAQVTDLAKQMILRFGMSGIGPVSLSKPGGSFLFVGRGVRPSNEYSEALAIKIDEQIRTITELCYNEAVEIMDLNRISLDLAVTGLIQDEVLTGVSFEKVVADFSKLPTNKIYESKFPKK.

Residues 1-12 lie on the Stromal side of the membrane; it reads MNKKETNTSWWR. The helical transmembrane segment at 13–33 threads the bilayer; the sequence is IILISLGISIICILAAFLAMK. Topologically, residues 34–135 are lumenal; it reads DGFFVLENNT…HPPKLDIFKT (102 aa). The chain crosses the membrane as a helical span at residues 136-156; it reads ISDTLGSLIVPGLVVAVFYLF. Topologically, residues 157–663 are stromal; sequence LERANNNNNN…KIYESKFPKK (507 aa). A disordered region spans residues 165–184; that stretch reads NNNSNGSPFGPGGGPNQNMR. 244–251 is a binding site for ATP; that stretch reads GPPGTGKT. Zn(2+) is bound at residue histidine 465. Residue glutamate 466 is part of the active site. The Zn(2+) site is built by histidine 469 and aspartate 543.

The protein in the central section; belongs to the AAA ATPase family. In the C-terminal section; belongs to the peptidase M41 family. As to quaternary structure, homohexamer. Requires Zn(2+) as cofactor.

The protein resides in the plastid. It is found in the chloroplast thylakoid membrane. In terms of biological role, acts as a processive, ATP-dependent zinc metallopeptidase. The protein is ATP-dependent zinc metalloprotease FtsH of Heterosigma akashiwo (strain NIES-293 / 8280G21-1).